Reading from the N-terminus, the 161-residue chain is NADH-quinone oxidoreductase subunit I (161 aa).

2 consecutive 4Fe-4S ferredoxin-type domains span residues 53 to 82 and 92 to 121; these read RRYP…IEAE and TRYD…EGPN. [4Fe-4S] cluster-binding residues include Cys-62, Cys-65, Cys-68, Cys-72, Cys-101, Cys-104, Cys-107, and Cys-111.

Belongs to the complex I 23 kDa subunit family. NDH-1 is composed of 14 different subunits. Subunits NuoA, H, J, K, L, M, N constitute the membrane sector of the complex. [4Fe-4S] cluster is required as a cofactor.

Its subcellular location is the cell inner membrane. The catalysed reaction is a quinone + NADH + 5 H(+)(in) = a quinol + NAD(+) + 4 H(+)(out). Functionally, NDH-1 shuttles electrons from NADH, via FMN and iron-sulfur (Fe-S) centers, to quinones in the respiratory chain. The immediate electron acceptor for the enzyme in this species is believed to be ubiquinone. Couples the redox reaction to proton translocation (for every two electrons transferred, four hydrogen ions are translocated across the cytoplasmic membrane), and thus conserves the redox energy in a proton gradient. In Hyphomonas neptunium (strain ATCC 15444), this protein is NADH-quinone oxidoreductase subunit I.